The following is a 293-amino-acid chain: MVVSVPATSANLGPGFDCLGLSLNLRNRFFIEPSSFHAVKLVGEGEGIPKFLTNNIFTKVFYEILKKHGNDGSFKFLLHNKVPITRGMGSSSAMIVGAVASAFAFLGFDFDRENIVNTALIYENHPDNITPAVFGGYNAAFVEKKKVISLKTKIPSFLKAVMVIPNRAISTKQSRHLLPKRYSVQESVFNLSHASLMTMAIVQGKWDLLRCCSKDRMHQYKRMQTYPVLFAIQKIALENNALMSTLSGSGSSFFNMCYEEDAPKLKQVLSKKFPKFRVAVLDFDNDGVLIEKD.

83–93 serves as a coordination point for ATP; that stretch reads PITRGMGSSSA.

It belongs to the GHMP kinase family. Homoserine kinase subfamily.

The protein resides in the cytoplasm. The enzyme catalyses L-homoserine + ATP = O-phospho-L-homoserine + ADP + H(+). It participates in amino-acid biosynthesis; L-threonine biosynthesis; L-threonine from L-aspartate: step 4/5. Functionally, catalyzes the ATP-dependent phosphorylation of L-homoserine to L-homoserine phosphate. The protein is Homoserine kinase of Helicobacter pylori (strain ATCC 700392 / 26695) (Campylobacter pylori).